The chain runs to 122 residues: uncharacterized protein (122 aa).

A disordered region spans residues 97 to 122; sequence TSRNGFSNPNKDGKKNDDDNNSSSKS.

This is an uncharacterized protein from Mycoplasma genitalium (strain ATCC 33530 / DSM 19775 / NCTC 10195 / G37) (Mycoplasmoides genitalium).